The primary structure comprises 1000 residues: MPAENQNTGQDRSSNSISKNGNSQVGCHTVPNEELNITVAVRCRGRNEREISMKSSVVVNVPDITGSKEISINTTGDTGITAQMNAKRYTVDKVFGPGASQDLIFDEVAGPLFQDFIKGYNCTVLVYGMTSTGKTYTMTGDEKLYNGELSDAAGIIPRVLLKLFDTLELQQNDYVVKCSFIELYNEELKDLLDSNSNGSSNTGFDGQFMKKLRIFDSSTANNTTSNSASSSRSNSRNSSPRSLNDLTPKAALLRKRLRTKSLPNTIKQQYQQQQAVNSRNNSSSNSGSTTNNASSNTNTNNGQRSSMAPNDQTNGIYIQNLQEFHITNAMEGLNLLQKGLKHRQVASTKMNDFSSRSHTIFTITLYKKHQDELFRISKMNLVDLAGSENINRSGALNQRAKEAGSINQSLLTLGRVINALVDKSGHIPFRESKLTRLLQDSLGGNTKTALIATISPAKVTSEETCSTLEYASKAKNIKNKPQLGSFIMKDILVKNITMELAKIKSDLLSTKSKEGIYMSQDHYKNLNSDLESYKNEVQECKREIESLTSKNALLVKDKLKSKETIQSQNCQIESLKTTIDHLRAQLDKQHKTEIEISDFNNKLQKLTEVMQMALHDYKKRELDLNQKFEMHITKEIKKLKSTLFLQLNTMQQESILQETNIQPNLDMIKNEVLTLMRTMQEKAELMYKDCVKKILNESPKFFNVVIEKIDIIRVDFQKFYKNIAENLSDISEENNNMKQYLKNHFFKNNHQELLNRHVDSTYENIEKRTNEFVENFKKVLNDHLDENKKLIMQNLTTATSAVIDQEMDLFEPKRVKWENSFDLINDCDSMNNEFYNSMAATLSQIKSTVDTSSNSMNESISVMKGQVEESENAISLLKNNTKFNDQFEQLINKHNMLKDNIKNSITSTHSHITNVDDIYNTIENIMKNYGNKENATKDEMIENILKEIPNLSKKMPLRLSNINSNSVQSVISPKKHAIEDENKSSENVDNEGSRKMLKIE.

Over residues 1 to 26 the composition is skewed to polar residues; sequence MPAENQNTGQDRSSNSISKNGNSQVG. The disordered stretch occupies residues 1–28; it reads MPAENQNTGQDRSSNSISKNGNSQVGCH. The Kinesin motor domain maps to 36–477; sequence NITVAVRCRG…LEYASKAKNI (442 aa). Position 128–135 (128–135) interacts with ATP; it reads GMTSTGKT. Positions 220-242 are enriched in low complexity; it reads ANNTTSNSASSSRSNSRNSSPRS. Disordered stretches follow at residues 220–248 and 260–312; these read ANNT…DLTP and KSLP…PNDQ. Over residues 261–276 the composition is skewed to polar residues; the sequence is SLPNTIKQQYQQQQAV. Positions 277–301 are enriched in low complexity; that stretch reads NSRNNSSSNSGSTTNNASSNTNTNN. A compositionally biased stretch (polar residues) spans 302 to 312; it reads GQRSSMAPNDQ. 2 coiled-coil regions span residues 518-615 and 860-904; these read MSQD…MALH and ISVM…IKNS. The tract at residues 970–1000 is disordered; the sequence is VISPKKHAIEDENKSSENVDNEGSRKMLKIE. Residue serine 972 is modified to Phosphoserine. The span at 976 to 1000 shows a compositional bias: basic and acidic residues; that stretch reads HAIEDENKSSENVDNEGSRKMLKIE.

Belongs to the TRAFAC class myosin-kinesin ATPase superfamily. Kinesin family. BimC subfamily.

The protein localises to the cytoplasm. The protein resides in the cytoskeleton. Its subcellular location is the spindle. It is found in the mitochondrion. Functionally, elongates the mitotic spindle by interacting with spindle microtubules to generate an outward force pushing spindle poles apart. Following spindle assembly, CIN8 and KIP1 apparently act to oppose a force, possibly generated by KAR3, that draws separated poles back together. The chain is Kinesin-like protein CIN8 (CIN8) from Saccharomyces cerevisiae (strain ATCC 204508 / S288c) (Baker's yeast).